The following is a 452-amino-acid chain: Lipase member H (452 aa).

A signal peptide spans 1 to 16 (MLRFYLFISLLCLVRS). N-linked (GlcNAc...) asparagine glycosylation is found at N50, N66, and N122. The active-site Nucleophile is the S154. The active-site Charge relay system is the D178. A disulfide bridge connects residues C233 and C247. The active-site Charge relay system is H249. N263 carries N-linked (GlcNAc...) asparagine glycosylation. Disulfide bonds link C271–C282, C285–C293, and C428–C447.

This sequence belongs to the AB hydrolase superfamily. Lipase family. In terms of assembly, interacts with TTMP/C3orf52. In terms of tissue distribution, expressed in liver and lacrimal gland.

Its subcellular location is the secreted. It localises to the cell membrane. It catalyses the reaction 1-hexadecanoyl-2-(9Z-octadecenoyl)-sn-glycero-3-phosphate + H2O = 2-(9Z-octadecenoyl)-sn-glycero-3-phosphate + hexadecanoate + H(+). Functionally, hydrolyzes specifically phosphatidic acid (PA) to produce 2-acyl lysophosphatidic acid (LPA; a potent bioactive lipid mediator) and fatty acid. Does not hydrolyze other phospholipids, like phosphatidylserine (PS), phosphatidylcholine (PC) and phosphatidylethanolamine (PE) or triacylglycerol (TG). The polypeptide is Lipase member H (LIPH) (Oryctolagus cuniculus (Rabbit)).